Consider the following 207-residue polypeptide: Probable GTP-binding protein EngB (207 aa).

An EngB-type G domain is found at 24 to 199 (GGYEVAFAGR…RGIVGGWLGL (176 aa)). GTP contacts are provided by residues 32-39 (GRSNAGKS), 59-63 (GRTQQ), 77-80 (DLPG), 144-147 (TKAD), and 178-180 (YSG). Residues S39 and T61 each contribute to the Mg(2+) site.

Belongs to the TRAFAC class TrmE-Era-EngA-EngB-Septin-like GTPase superfamily. EngB GTPase family. The cofactor is Mg(2+).

Functionally, necessary for normal cell division and for the maintenance of normal septation. The protein is Probable GTP-binding protein EngB of Xanthomonas campestris pv. campestris (strain 8004).